A 447-amino-acid polypeptide reads, in one-letter code: Argininosuccinate synthase (447 aa).

ATP contacts are provided by residues 17-25 and Ala43; that span reads AFSGGLDTS. L-citrulline is bound at residue Tyr99. Positions 129 and 131 each coordinate ATP. Residues Thr131, Asn135, and Asp136 each coordinate L-aspartate. Asn135 serves as a coordination point for L-citrulline. Asp136 is an ATP binding site. 2 residues coordinate L-citrulline: Arg139 and Ser192. Asp194 provides a ligand contact to ATP. 3 residues coordinate L-citrulline: Thr201, Glu203, and Glu280.

The protein belongs to the argininosuccinate synthase family. Type 2 subfamily. As to quaternary structure, homotetramer.

Its subcellular location is the cytoplasm. The catalysed reaction is L-citrulline + L-aspartate + ATP = 2-(N(omega)-L-arginino)succinate + AMP + diphosphate + H(+). It functions in the pathway amino-acid biosynthesis; L-arginine biosynthesis; L-arginine from L-ornithine and carbamoyl phosphate: step 2/3. The sequence is that of Argininosuccinate synthase from Escherichia coli O9:H4 (strain HS).